Here is a 725-residue protein sequence, read N- to C-terminus: Non-structural protein 4 (725 aa).

2 disordered regions span residues 1–26 (MSKG…GNRN) and 666–725 (DEVE…TKDE). The segment covering 7 to 16 (TVTSLVSGPP) has biased composition (polar residues). Over residues 675–686 (ENQKQELDAKSD) the composition is skewed to basic and acidic residues. Positions 687–709 (DVEESSVEGEEDDDGSSASEETD) are enriched in acidic residues.

The polypeptide is Non-structural protein 4 (Rice gall dwarf virus (RGDV)).